Here is a 219-residue protein sequence, read N- to C-terminus: Histone H1.4 (219 aa).

The span at 1 to 15 shows a compositional bias: low complexity; that stretch reads MSETAPAAPAAPAPA. Residues 1 to 41 are disordered; sequence MSETAPAAPAAPAPAEKTPVKKKARKSAGAAKRKASGPPVS. Serine 2 carries the post-translational modification N-acetylserine. Serine 2 is subject to Phosphoserine. At lysine 17 the chain carries N6-acetyllysine. Threonine 18 carries the phosphothreonine modification. A compositionally biased stretch (basic residues) spans 20 to 35; it reads VKKKARKSAGAAKRKA. Position 26 is an N6-acetyllysine; alternate (lysine 26). At lysine 26 the chain carries N6-methyllysine; alternate. At lysine 34 the chain carries N6-(beta-hydroxybutyryl)lysine; alternate. Residue lysine 34 is modified to N6-succinyllysine; alternate. Phosphoserine is present on serine 36. The H15 domain maps to 36–109; sequence SGPPVSELIT…GASGSFKLNK (74 aa). The residue at position 52 (lysine 52) is an N6-(beta-hydroxybutyryl)lysine. At arginine 54 the chain carries Citrulline. Residues lysine 64, lysine 85, lysine 90, and lysine 106 each carry the N6-(beta-hydroxybutyryl)lysine modification. A disordered region spans residues 92–219; it reads TLVQTKGTGA…KPKKAAAKKK (128 aa). Basic residues predominate over residues 119-140; that stretch reads KAKKAGAAKAKKPAGAAKKPKK. Threonine 146 is subject to Phosphothreonine. Composition is skewed to basic residues over residues 149–160 and 168–185; these read KSAKKTPKKAKK and KKAK…KKAP. Serine 150 bears the ADP-ribosylserine mark. Serine 187 carries the phosphoserine modification. The segment covering 192 to 219 has biased composition (basic residues); it reads KAVKPKAAKPKTAKPKAAKPKKAAAKKK.

It belongs to the histone H1/H5 family. In terms of processing, H1 histones are progressively phosphorylated during the cell cycle, becoming maximally phosphorylated during late G2 phase and M phase, and being dephosphorylated sharply thereafter. Acetylated at Lys-26. Deacetylated at Lys-26 by SIRT1. Post-translationally, citrullination at Arg-54 (H1R54ci) by PADI4 takes place within the DNA-binding site of H1 and results in its displacement from chromatin and global chromatin decondensation, thereby promoting pluripotency and stem cell maintenance. In terms of processing, ADP-ribosylated on Ser-150 in response to DNA damage.

It is found in the nucleus. It localises to the chromosome. Histone H1 protein binds to linker DNA between nucleosomes forming the macromolecular structure known as the chromatin fiber. Histones H1 are necessary for the condensation of nucleosome chains into higher-order structured fibers. Also acts as a regulator of individual gene transcription through chromatin remodeling, nucleosome spacing and DNA methylation. The chain is Histone H1.4 from Homo sapiens (Human).